Consider the following 831-residue polypeptide: Periplasmic nitrate reductase (831 aa).

A signal peptide (tat-type signal) is located at residues 1–38 (MSMARRDFIKQTAAAAAATVAGVPLTGYTQNIVTESEA). The 4Fe-4S Mo/W bis-MGD-type domain maps to 41-97 (LKWSKAPCRFCGTGCGVNVAVKDNQVVATHGDFNAEVNKGLNCVKGYFLSKIMYGSD). Residues Cys-48, Cys-51, Cys-55, and Cys-83 each coordinate [4Fe-4S] cluster. Mo-bis(molybdopterin guanine dinucleotide)-binding positions include Lys-85, Gln-152, Asn-177, Cys-181, 214–221 (WGSNMAEM), 245–249 (STFEH), 264–266 (QSD), Met-375, Gln-379, Asn-485, 511–512 (SD), Lys-534, Asp-561, and 721–730 (TGRVLEHWHS). Residue Trp-797 participates in substrate binding. Positions 805 and 822 each coordinate Mo-bis(molybdopterin guanine dinucleotide).

It belongs to the prokaryotic molybdopterin-containing oxidoreductase family. NasA/NapA/NarB subfamily. As to quaternary structure, component of the periplasmic nitrate reductase NapAB complex composed of NapA and NapB. [4Fe-4S] cluster serves as cofactor. Requires Mo-bis(molybdopterin guanine dinucleotide) as cofactor. Predicted to be exported by the Tat system. The position of the signal peptide cleavage has not been experimentally proven.

The protein localises to the periplasm. It catalyses the reaction 2 Fe(II)-[cytochrome] + nitrate + 2 H(+) = 2 Fe(III)-[cytochrome] + nitrite + H2O. Catalytic subunit of the periplasmic nitrate reductase complex NapAB. Receives electrons from NapB and catalyzes the reduction of nitrate to nitrite. In Bordetella parapertussis (strain 12822 / ATCC BAA-587 / NCTC 13253), this protein is Periplasmic nitrate reductase.